The primary structure comprises 447 residues: Asparagine--tRNA ligase (447 aa).

It belongs to the class-II aminoacyl-tRNA synthetase family. In terms of assembly, homodimer.

It is found in the cytoplasm. It catalyses the reaction tRNA(Asn) + L-asparagine + ATP = L-asparaginyl-tRNA(Asn) + AMP + diphosphate + H(+). The protein is Asparagine--tRNA ligase of Lactococcus lactis subsp. lactis (strain IL1403) (Streptococcus lactis).